We begin with the raw amino-acid sequence, 230 residues long: Ureidoacrylate amidohydrolase RutB (230 aa).

The active-site Proton acceptor is aspartate 24. Lysine 133 is an active-site residue. Cysteine 166 (nucleophile) is an active-site residue.

This sequence belongs to the isochorismatase family. RutB subfamily.

The catalysed reaction is (Z)-3-ureidoacrylate + H2O + H(+) = (Z)-3-aminoacrylate + NH4(+) + CO2. The enzyme catalyses (Z)-3-ureidoacrylate + H2O = (Z)-3-aminoacrylate + carbamate + H(+). It carries out the reaction (Z)-2-methylureidoacrylate + H2O + H(+) = (Z)-2-methylaminoacrylate + NH4(+) + CO2. Its function is as follows. Hydrolyzes ureidoacrylate to form aminoacrylate and carbamate. The carbamate hydrolyzes spontaneously, thereby releasing one of the nitrogen atoms of the pyrimidine ring as ammonia and one of its carbon atoms as CO2. The sequence is that of Ureidoacrylate amidohydrolase RutB from Escherichia coli (strain B / BL21-DE3).